Here is a 359-residue protein sequence, read N- to C-terminus: Probable F-box protein At3g61730 (359 aa).

2 stretches are compositionally biased toward basic and acidic residues: residues 1–14 (MKTRSSDAEGDSRG) and 37–48 (QKNDIQREEDGR). Positions 1–60 (MKTRSSDAEGDSRGKMIAPVGEGNGGRKRKLVQSNEQKNDIQREEDGRAKRRIVQSSDQK) are disordered. In terms of domain architecture, F-box; degenerate spans 82-128 (QSRFSWYEQDIWTYISRFLDGKSLVKLGATNKWFYKIAMEDTVWRFA).

As to quaternary structure, interacts with SKP1A. In terms of tissue distribution, expressed in flower buds, developing anthers, pollen grains, siliques, rosette leaves and roots. Detected at lower levels in open flowers, stems and cauline leaves. Expressed in young seedling in the hydathodes, shoot apical meristem, root tips and lateral root primordia.

The protein resides in the nucleus. Functionally, regulates tapetum degeneration and pollen maturation during anther development. In Arabidopsis thaliana (Mouse-ear cress), this protein is Probable F-box protein At3g61730 (RMF).